The sequence spans 411 residues: Serine/threonine transporter SstT (411 aa).

The next 8 membrane-spanning stretches (helical) occupy residues 17 to 37 (IMVGLVAGIIVALVSPATASA), 41 to 61 (LGALFVGALKAVAPVLVLVLV), 79 to 99 (ILFLYLLGTFAAALVAVVVSF), 138 to 158 (ALISANYIGILAWAVGLGLAL), 189 to 209 (LGIFGLVASTLAETGFGALWG), 214 to 234 (LVVLIGCMLLVALVLNPLIVF), 295 to 315 (MAGAAITITVLTLAAVHTLGI), and 327 to 347 (VVAAVCACGASGVAGGSLLLI).

The protein belongs to the dicarboxylate/amino acid:cation symporter (DAACS) (TC 2.A.23) family.

It localises to the cell inner membrane. It catalyses the reaction L-serine(in) + Na(+)(in) = L-serine(out) + Na(+)(out). It carries out the reaction L-threonine(in) + Na(+)(in) = L-threonine(out) + Na(+)(out). Involved in the import of serine and threonine into the cell, with the concomitant import of sodium (symport system). This is Serine/threonine transporter SstT from Serratia proteamaculans (strain 568).